Reading from the N-terminus, the 221-residue chain is Large ribosomal subunit protein uL4 (221 aa).

Residues 44–102 (AARQGTHKVKRRGEVRGGGKKPYRQKGTGRARQGSTRAPQFAGGGVVHGPTPRDYSQRT) are disordered. Over residues 61–72 (GGKKPYRQKGTG) the composition is skewed to basic residues.

It belongs to the universal ribosomal protein uL4 family. Part of the 50S ribosomal subunit.

In terms of biological role, one of the primary rRNA binding proteins, this protein initially binds near the 5'-end of the 23S rRNA. It is important during the early stages of 50S assembly. It makes multiple contacts with different domains of the 23S rRNA in the assembled 50S subunit and ribosome. Forms part of the polypeptide exit tunnel. This Streptomyces avermitilis (strain ATCC 31267 / DSM 46492 / JCM 5070 / NBRC 14893 / NCIMB 12804 / NRRL 8165 / MA-4680) protein is Large ribosomal subunit protein uL4.